The chain runs to 158 residues: NAD(P)H-quinone oxidoreductase subunit J, chloroplastic (158 aa).

It belongs to the complex I 30 kDa subunit family. In terms of assembly, NDH is composed of at least 16 different subunits, 5 of which are encoded in the nucleus.

The protein resides in the plastid. It is found in the chloroplast thylakoid membrane. It catalyses the reaction a plastoquinone + NADH + (n+1) H(+)(in) = a plastoquinol + NAD(+) + n H(+)(out). It carries out the reaction a plastoquinone + NADPH + (n+1) H(+)(in) = a plastoquinol + NADP(+) + n H(+)(out). Functionally, NDH shuttles electrons from NAD(P)H:plastoquinone, via FMN and iron-sulfur (Fe-S) centers, to quinones in the photosynthetic chain and possibly in a chloroplast respiratory chain. The immediate electron acceptor for the enzyme in this species is believed to be plastoquinone. Couples the redox reaction to proton translocation, and thus conserves the redox energy in a proton gradient. This chain is NAD(P)H-quinone oxidoreductase subunit J, chloroplastic, found in Citrus sinensis (Sweet orange).